The sequence spans 460 residues: tRNA (guanine(10)-N(2))-methyltransferase TRMT11 (460 aa).

At alanine 2 the chain carries N-acetylalanine.

This sequence belongs to the class I-like SAM-binding methyltransferase superfamily. TRM11 methyltransferase family. In terms of assembly, part of the heterodimeric TRMT11-TRM112 methyltransferase complex; this complex forms an active tRNA methyltransferase, where TRMT112 acts as an activator of the catalytic subunit TRMT11.

Its subcellular location is the cytoplasm. The catalysed reaction is guanosine(10) in tRNA + S-adenosyl-L-methionine = N(2)-methylguanosine(10) in tRNA + S-adenosyl-L-homocysteine + H(+). Its function is as follows. Catalytic subunit of the TRMT11-TRM112 methyltransferase complex, that specifically mediates the S-adenosyl-L-methionine-dependent N(2)-methylation of guanosine nucleotide at position 10 (m2G10) in tRNAs. This is one of the major tRNA (guanine-N(2))-methyltransferases. This chain is tRNA (guanine(10)-N(2))-methyltransferase TRMT11, found in Bos taurus (Bovine).